We begin with the raw amino-acid sequence, 191 residues long: Potassium-transporting ATPase KdpC subunit (191 aa).

A helical membrane pass occupies residues 10–30 (ITLVFCVFFSVFYILVLWLFA).

It belongs to the KdpC family. As to quaternary structure, the system is composed of three essential subunits: KdpA, KdpB and KdpC.

Its subcellular location is the cell inner membrane. Its function is as follows. Part of the high-affinity ATP-driven potassium transport (or Kdp) system, which catalyzes the hydrolysis of ATP coupled with the electrogenic transport of potassium into the cytoplasm. This subunit acts as a catalytic chaperone that increases the ATP-binding affinity of the ATP-hydrolyzing subunit KdpB by the formation of a transient KdpB/KdpC/ATP ternary complex. The sequence is that of Potassium-transporting ATPase KdpC subunit from Bacteroides fragilis (strain YCH46).